A 145-amino-acid chain; its full sequence is Brain and acute leukemia cytoplasmic protein (145 aa).

The N-myristoyl glycine moiety is linked to residue G2. C3 carries S-palmitoyl cysteine lipidation. Residues 3 to 35 (CGGSRADAIEPRYYESWTRETESTWLTYTDSDA) are interaction with CAMK2A. The segment at 36–113 (LPSAAATDSG…GLWTTEAKRD (78 aa)) is disordered. The segment covering 83 to 106 (CGTQCPNSQSLSSGPLTQKQNGLW) has biased composition (polar residues).

In terms of assembly, interacts with CAMK2A. Post-translationally, palmitoylation and myristoylation target the protein to the lipid rafts. As to expression, predominantly expressed in the brain (at protein level). Within the brain, found in most of forebrain structures, including the cerebral cortex, hippocampal formation, olfactory bulb, anterior olfactory nuclei, piriform cortex, tenia tecta and amygdaloid nuclei. Not detected in glial cells.

The protein localises to the cytoplasm. It localises to the synapse. Its subcellular location is the synaptosome. It is found in the membrane raft. The protein resides in the postsynaptic density. May play a synaptic role at the postsynaptic lipid rafts possibly through interaction with CAMK2A. In Rattus norvegicus (Rat), this protein is Brain and acute leukemia cytoplasmic protein (Baalc).